Here is a 324-residue protein sequence, read N- to C-terminus: Pancreas transcription factor 1 subunit alpha (324 aa).

The bHLH domain maps to 160–212 (QLRQAANVRERRRMQSINDAFEGLRSHIPTLPYEKRLSKVDTLRLAIGYINFL). Residues 302–324 (DPRKLNSKSFDNIENEPPFEFVS) form a disordered region.

In terms of assembly, component of the pancreas transcription factor 1 complex (PTF1) which is composed of TCF3/p75, TCF12/p64 and PTF1A/p48. TCF3 is responsible for the nuclear import of the p48/p64 complex. Interacts with TCF3 and RBPSUH/RBP-Jkappa. Expressed in precursors of pancreatic islets, acini and ducts.

It localises to the nucleus. The protein localises to the cytoplasm. Functionally, transcription factor implicated in the cell fate determination in various organs. Binds to the E-box consensus sequence 5'-CANNTG-3'. Plays a role in early and late pancreas development and differentiation. Important for determining whether cells allocated to the pancreatic buds continue towards pancreatic organogenesis or revert back to duodenal fates. May be involved in the maintenance of exocrine pancreas-specific gene expression including ELA1 and amylase. Required for the formation of pancreatic acinar and ductal cells. Plays an important role in cerebellar development. Directly regulated by FOXN4 and RORC during retinal development, FOXN4-PTF1A pathway plays a central role in directing the differentiation of retinal progenitors towards horizontal and amacrine fates. This Mus musculus (Mouse) protein is Pancreas transcription factor 1 subunit alpha (Ptf1a).